A 135-amino-acid chain; its full sequence is MNNLSKNDFLKLYRNILRCHKILQEPMRSMGDQYVKTEWKLHKKATPKQAIQFYEQWNIYCNILLTQRDSILKENSNNNDNYNNNNNDNNNDNNNFINIGQDLNEKQMKSLNKKQIEQLDKLKSETSTVYTPSDK.

The tract at residues 73–101 is disordered; the sequence is KENSNNNDNYNNNNNDNNNDNNNFINIGQ. Residues 75–95 show a composition bias toward low complexity; it reads NSNNNDNYNNNNNDNNNDNNN.

The protein belongs to the complex I LYR family. SDHAF3 subfamily. Interacts with the iron-sulfur protein subunit within the SDH catalytic dimer.

Its subcellular location is the mitochondrion matrix. Its function is as follows. Plays an essential role in the assembly of succinate dehydrogenase (SDH), an enzyme complex (also referred to as respiratory complex II) that is a component of both the tricarboxylic acid (TCA) cycle and the mitochondrial electron transport chain, and which couples the oxidation of succinate to fumarate with the reduction of ubiquinone (coenzyme Q) to ubiquinol. Promotes maturation of the iron-sulfur protein subunit of the SDH catalytic dimer, protecting it from the deleterious effects of oxidants. May act together with SDHAF1. In Dictyostelium discoideum (Social amoeba), this protein is Succinate dehydrogenase assembly factor 3, mitochondrial (acn9).